We begin with the raw amino-acid sequence, 444 residues long: L-cysteine:1D-myo-inositol 2-amino-2-deoxy-alpha-D-glucopyranoside ligase (444 aa).

Over residues 1–13 (MPCDRKTSPDQHH) the composition is skewed to basic and acidic residues. The tract at residues 1–21 (MPCDRKTSPDQHHALQIHRHH) is disordered. Zn(2+) is bound at residue cysteine 75. L-cysteinyl-5'-AMP contacts are provided by residues 75-78 (CGIT), threonine 90, and 113-115 (NIT). Positions 77 to 87 (ITPYDATHLGH) match the 'HIGH' region motif. Residues 219–224 (ERGGDP) carry the 'ERGGDP' region motif. Tryptophan 259 is a binding site for L-cysteinyl-5'-AMP. Cysteine 263 contributes to the Zn(2+) binding site. 281–283 (GSD) serves as a coordination point for L-cysteinyl-5'-AMP. Residue histidine 288 participates in Zn(2+) binding. Residue isoleucine 315 participates in L-cysteinyl-5'-AMP binding. The 'KMSKS' region signature appears at 321–325 (KMSKS).

The protein belongs to the class-I aminoacyl-tRNA synthetase family. MshC subfamily. In terms of assembly, monomer. Zn(2+) serves as cofactor.

The catalysed reaction is 1D-myo-inositol 2-amino-2-deoxy-alpha-D-glucopyranoside + L-cysteine + ATP = 1D-myo-inositol 2-(L-cysteinylamino)-2-deoxy-alpha-D-glucopyranoside + AMP + diphosphate + H(+). Its function is as follows. Catalyzes the ATP-dependent condensation of GlcN-Ins and L-cysteine to form L-Cys-GlcN-Ins. This chain is L-cysteine:1D-myo-inositol 2-amino-2-deoxy-alpha-D-glucopyranoside ligase, found in Mycolicibacterium gilvum (strain PYR-GCK) (Mycobacterium gilvum (strain PYR-GCK)).